Consider the following 461-residue polypeptide: Phosphoglucosamine mutase (461 aa).

Ser-107 functions as the Phosphoserine intermediate in the catalytic mechanism. Mg(2+) contacts are provided by Ser-107, Asp-254, Asp-256, and Asp-258. Ser-107 bears the Phosphoserine mark.

It belongs to the phosphohexose mutase family. Mg(2+) is required as a cofactor. Activated by phosphorylation.

It carries out the reaction alpha-D-glucosamine 1-phosphate = D-glucosamine 6-phosphate. In terms of biological role, catalyzes the conversion of glucosamine-6-phosphate to glucosamine-1-phosphate. The chain is Phosphoglucosamine mutase from Bifidobacterium longum (strain DJO10A).